Consider the following 111-residue polypeptide: Photosystem II reaction center Psb28 protein (111 aa).

This sequence belongs to the Psb28 family. In terms of assembly, part of the photosystem II complex.

The protein localises to the cellular thylakoid membrane. The sequence is that of Photosystem II reaction center Psb28 protein from Nostoc sp. (strain PCC 7120 / SAG 25.82 / UTEX 2576).